A 1293-amino-acid polypeptide reads, in one-letter code: Enterobactin synthase component F (1293 aa).

Residues methionine 1–alanine 301 form an elongation/condensation region. The segment at serine 482–threonine 887 is adenylation. Positions alanine 971 to glutamate 1046 constitute a Carrier domain. O-(pantetheine 4'-phosphoryl)serine is present on serine 1006. The segment at proline 1066 to arginine 1293 is thioesterase. Histidine 1271 (proton acceptor; for thioesterase activity) is an active-site residue.

The protein belongs to the ATP-dependent AMP-binding enzyme family. EntF subfamily. In terms of assembly, proteins EntB, EntD, EntE and EntF are the component of the enterobactin synthase. Components probably do not form a stable complex. EntF acts as a catalytic monomer. It depends on pantetheine 4'-phosphate as a cofactor. Post-translationally, 4'-phosphopantetheine is transferred from CoA to a specific serine of apo-EntF by EntD. Holo-EntF so formed is then acylated with seryl-AMP.

The protein resides in the cytoplasm. The enzyme catalyses 3 2,3-dihydroxybenzoate + 3 L-serine + 6 ATP = enterobactin + 6 AMP + 6 diphosphate + 4 H(+). The catalysed reaction is holo-[peptidyl-carrier protein] + L-serine + ATP = L-seryl-[peptidyl-carrier protein] + AMP + diphosphate. It participates in siderophore biosynthesis; enterobactin biosynthesis. Its function is as follows. Involved in the biosynthesis of the siderophore enterobactin (enterochelin), which is a macrocyclic trimeric lactone of N-(2,3-dihydroxybenzoyl)-serine. EntF catalyzes the activation of L-serine via ATP-dependent PPi exchange reaction to form seryladenylate. Activated L-serine is loaded onto the peptidyl carrier domain via a thioester linkage to the phosphopanthetheine moiety, forming seryl-S-Ppant-EntF. EntF acts then as the sole catalyst for the formation of the three amide and three ester linkages found in enterobactin, using seryladenylate and 2,3-dihydroxybenzoate-S-Ppant-EntB (DHB-S-Ppant-EntB) as substrates, via the formation of a DHB-Ser-S-Ppant-EntF intermediate. The sequence is that of Enterobactin synthase component F (entF) from Escherichia coli O157:H7.